A 308-amino-acid polypeptide reads, in one-letter code: Ribosomal protein L11 methyltransferase (308 aa).

Thr160, Gly181, Asp203, and Asn245 together coordinate S-adenosyl-L-methionine.

This sequence belongs to the methyltransferase superfamily. PrmA family.

The protein resides in the cytoplasm. It catalyses the reaction L-lysyl-[protein] + 3 S-adenosyl-L-methionine = N(6),N(6),N(6)-trimethyl-L-lysyl-[protein] + 3 S-adenosyl-L-homocysteine + 3 H(+). Its function is as follows. Methylates ribosomal protein L11. The polypeptide is Ribosomal protein L11 methyltransferase (Thermoanaerobacter pseudethanolicus (strain ATCC 33223 / 39E) (Clostridium thermohydrosulfuricum)).